Here is a 352-residue protein sequence, read N- to C-terminus: Biotin synthase (352 aa).

A Radical SAM core domain is found at 44 to 262; that stretch reads NRVQVSTLLS…LAVARIMMPK (219 aa). Positions 59, 63, and 66 each coordinate [4Fe-4S] cluster. [2Fe-2S] cluster is bound by residues C103, C134, C194, and R266.

This sequence belongs to the radical SAM superfamily. Biotin synthase family. In terms of assembly, homodimer. Requires [4Fe-4S] cluster as cofactor. [2Fe-2S] cluster is required as a cofactor.

The catalysed reaction is (4R,5S)-dethiobiotin + (sulfur carrier)-SH + 2 reduced [2Fe-2S]-[ferredoxin] + 2 S-adenosyl-L-methionine = (sulfur carrier)-H + biotin + 2 5'-deoxyadenosine + 2 L-methionine + 2 oxidized [2Fe-2S]-[ferredoxin]. The protein operates within cofactor biosynthesis; biotin biosynthesis; biotin from 7,8-diaminononanoate: step 2/2. In terms of biological role, catalyzes the conversion of dethiobiotin (DTB) to biotin by the insertion of a sulfur atom into dethiobiotin via a radical-based mechanism. In Pseudomonas aeruginosa (strain LESB58), this protein is Biotin synthase.